The primary structure comprises 194 residues: Mpv17-like protein (194 aa).

Over 1–14 the chain is Cytoplasmic; it reads MASWWRAFPQAARR. A helical membrane pass occupies residues 15–34; sequence YPWPTNVLLYAGLFSAGDAL. A targeting to peroxisomes region spans residues 16 to 55; sequence PWPTNVLLYAGLFSAGDALQQRLRGGPADWRQTRRVATLA. Topologically, residues 35 to 50 are lumenal; that stretch reads QQRLRGGPADWRQTRR. A helical membrane pass occupies residues 51–67; sequence VATLAVTFHGNFNYVWL. The Cytoplasmic portion of the chain corresponds to 68 to 91; the sequence is RLLERALPGRAPRTVLAKVLCDQT. The helical transmembrane segment at 92 to 110 threads the bilayer; sequence VGGPIALSAFYVGMSVLQG. Over 111 to 150 the chain is Lumenal; it reads KDDIFLDLKQKFWNTYKSGLMYWPFVQLTNFSLVPVHWRT. The chain crosses the membrane as a helical span at residues 151-168; sequence AYTGLCAFLWATFLCFSQ. The Cytoplasmic portion of the chain corresponds to 169–194; sequence QSGDGTLQSIFIFLRRKEASDKSPEK.

It belongs to the peroxisomal membrane protein PXMP2/4 family. As to expression, isoform 1 and isoform 3 are expressed in the kidney (at protein level). Isoform 1 is expressed in the kidney, spleen, heart, brain, lung and liver. Isoform 3 is expressed in the kidney. Isoform 1 and isoform 3 expression increase during development, reache their highest level in adulthood and decrease with aging.

It is found in the peroxisome membrane. Its subcellular location is the cytoplasm. Participates in reactive oxygen species metabolism by up- or down-regulation of the genes of antioxidant enzymes. Protective against the mitochondrial apoptotic cascade. In terms of biological role, participates in reactive oxygen species metabolism by up- or down-regulation of the genes of antioxidant enzymes. The sequence is that of Mpv17-like protein (Mpv17l) from Mus musculus (Mouse).